Consider the following 258-residue polypeptide: Serine/arginine-rich splicing factor x16 (258 aa).

In terms of domain architecture, RRM spans 8-81 (RKVYVGDLGN…RRARVELSTG (74 aa)). Disordered stretches follow at residues 81–113 (GKYA…GGRG) and 130–258 (CRER…VSRD). Gly residues predominate over residues 86–103 (SGGGGGGGGGGGGGGGLG). The segment covering 104–113 (GRDRGGGGRG) has biased composition (basic and acidic residues). Residues 116–132 (KCYECGGRGHFARHCRE) form a CCHC-type zinc finger. Composition is skewed to basic residues over residues 130 to 141 (CRERKARQRRRS) and 149 to 166 (STSR…RSRS). 2 stretches are compositionally biased toward basic and acidic residues: residues 180–197 (NGRD…HERN) and 210–221 (RRYEDEDDDRVR). 2 stretches are compositionally biased toward low complexity: residues 231–240 (RSASPAVRRG) and 249–258 (SSASRSVSRD).

Interacts (via Arg/Ser-rich region) with Alsin2/CG7564, Rbp1 and Doa (via N-terminus). Post-translationally, highly phosphorylated. May be phosphorylated by the serine/threonine-protein kinase Doa.

The protein localises to the nucleus. Functionally, serine/arginine-rich splicing factor (SR protein) involved in differential exon usage during RNA transcript processing, probably by binding exonic splicing enhancer elements and recruiting components of the splicing machinery. Binds RNA stem-loop structures with consensus sequence 5'-CCGUNUNKNW-3'. Regulator of genes involved in lipid and carbohydrate metabolism, the immune response and the response to xenobiotics. The sequence is that of Serine/arginine-rich splicing factor x16 from Drosophila melanogaster (Fruit fly).